We begin with the raw amino-acid sequence, 268 residues long: Indole-3-glycerol phosphate synthase (268 aa).

The protein belongs to the TrpC family.

The catalysed reaction is 1-(2-carboxyphenylamino)-1-deoxy-D-ribulose 5-phosphate + H(+) = (1S,2R)-1-C-(indol-3-yl)glycerol 3-phosphate + CO2 + H2O. It participates in amino-acid biosynthesis; L-tryptophan biosynthesis; L-tryptophan from chorismate: step 4/5. The polypeptide is Indole-3-glycerol phosphate synthase (Parafrankia sp. (strain EAN1pec)).